Reading from the N-terminus, the 86-residue chain is Neurotoxin-like protein NTL2 (86 aa).

The first 21 residues, 1–21, serve as a signal peptide directing secretion; that stretch reads MKTLLLSLVVVTIVCLDLGYT. Cystine bridges form between Cys24–Cys45, Cys38–Cys63, Cys67–Cys78, and Cys79–Cys84.

Belongs to the three-finger toxin family. Short-chain subfamily. Orphan group I sub-subfamily. As to expression, expressed by the venom gland.

Its subcellular location is the secreted. The chain is Neurotoxin-like protein NTL2 from Naja atra (Chinese cobra).